A 99-amino-acid chain; its full sequence is Putative protein adenylyltransferase MJ0141 (99 aa).

The GSX(10)DXD motif signature appears at 29–43; sequence GSYARGDYDEESDVD. Mg(2+)-binding residues include Asp-41 and Asp-43.

This sequence belongs to the MntA antitoxin family. Mg(2+) is required as a cofactor.

The enzyme catalyses L-tyrosyl-[protein] + ATP = O-(5'-adenylyl)-L-tyrosyl-[protein] + diphosphate. It catalyses the reaction O-(5'-adenylyl)-L-tyrosyl-[protein] + ATP = O-[5'-(adenylyl-(5'-&gt;3')-adenylyl)]-L-tyrosyl-[protein] + diphosphate. In terms of biological role, putative antitoxin component of a putative type VII toxin-antitoxin (TA) system. Its cognate toxin might be MF0142, which it might AMPylate. The polypeptide is Putative protein adenylyltransferase MJ0141 (Methanocaldococcus jannaschii (strain ATCC 43067 / DSM 2661 / JAL-1 / JCM 10045 / NBRC 100440) (Methanococcus jannaschii)).